Reading from the N-terminus, the 528-residue chain is Berberine bridge enzyme-like 17 (528 aa).

A signal peptide spans 1–19; that stretch reads MKEVVYVLLLVLLVSVSDA. Asn20, Asn35, Asn52, and Asn72 each carry an N-linked (GlcNAc...) asparagine glycan. An intrachain disulfide couples Cys32 to Cys94. The 178-residue stretch at 69-246 folds into the FAD-binding PCMH-type domain; sequence LNPNDTKLIA…LSWKINLVDV (178 aa). Residues 109–171 constitute a cross-link (6-(S-cysteinyl)-8alpha-(pros-histidyl)-FAD (His-Cys)); it reads HDYEGLSFTS…KTLAFAGGVC (63 aa). 3 N-linked (GlcNAc...) asparagine glycosylation sites follow: Asn256, Asn340, and Asn439.

This sequence belongs to the oxygen-dependent FAD-linked oxidoreductase family. Requires FAD as cofactor. Post-translationally, the FAD cofactor is bound via a bicovalent 6-S-cysteinyl, 8alpha-N1-histidyl FAD linkage.

The protein resides in the secreted. It is found in the cell wall. This is Berberine bridge enzyme-like 17 from Arabidopsis thaliana (Mouse-ear cress).